A 479-amino-acid chain; its full sequence is Aspartyl/glutamyl-tRNA(Asn/Gln) amidotransferase subunit B (479 aa).

Belongs to the GatB/GatE family. GatB subfamily. As to quaternary structure, heterotrimer of A, B and C subunits.

The catalysed reaction is L-glutamyl-tRNA(Gln) + L-glutamine + ATP + H2O = L-glutaminyl-tRNA(Gln) + L-glutamate + ADP + phosphate + H(+). The enzyme catalyses L-aspartyl-tRNA(Asn) + L-glutamine + ATP + H2O = L-asparaginyl-tRNA(Asn) + L-glutamate + ADP + phosphate + 2 H(+). Functionally, allows the formation of correctly charged Asn-tRNA(Asn) or Gln-tRNA(Gln) through the transamidation of misacylated Asp-tRNA(Asn) or Glu-tRNA(Gln) in organisms which lack either or both of asparaginyl-tRNA or glutaminyl-tRNA synthetases. The reaction takes place in the presence of glutamine and ATP through an activated phospho-Asp-tRNA(Asn) or phospho-Glu-tRNA(Gln). In Mesoplasma florum (strain ATCC 33453 / NBRC 100688 / NCTC 11704 / L1) (Acholeplasma florum), this protein is Aspartyl/glutamyl-tRNA(Asn/Gln) amidotransferase subunit B.